A 178-amino-acid polypeptide reads, in one-letter code: Crossover junction endodeoxyribonuclease RuvC (178 aa).

Residues Asp-11, Glu-71, and Asp-143 contribute to the active site. The Mg(2+) site is built by Asp-11, Glu-71, and Asp-143.

The protein belongs to the RuvC family. As to quaternary structure, homodimer which binds Holliday junction (HJ) DNA. The HJ becomes 2-fold symmetrical on binding to RuvC with unstacked arms; it has a different conformation from HJ DNA in complex with RuvA. In the full resolvosome a probable DNA-RuvA(4)-RuvB(12)-RuvC(2) complex forms which resolves the HJ. It depends on Mg(2+) as a cofactor.

Its subcellular location is the cytoplasm. It carries out the reaction Endonucleolytic cleavage at a junction such as a reciprocal single-stranded crossover between two homologous DNA duplexes (Holliday junction).. Its function is as follows. The RuvA-RuvB-RuvC complex processes Holliday junction (HJ) DNA during genetic recombination and DNA repair. Endonuclease that resolves HJ intermediates. Cleaves cruciform DNA by making single-stranded nicks across the HJ at symmetrical positions within the homologous arms, yielding a 5'-phosphate and a 3'-hydroxyl group; requires a central core of homology in the junction. The consensus cleavage sequence is 5'-(A/T)TT(C/G)-3'. Cleavage occurs on the 3'-side of the TT dinucleotide at the point of strand exchange. HJ branch migration catalyzed by RuvA-RuvB allows RuvC to scan DNA until it finds its consensus sequence, where it cleaves and resolves the cruciform DNA. This Neisseria meningitidis serogroup B (strain ATCC BAA-335 / MC58) protein is Crossover junction endodeoxyribonuclease RuvC.